The chain runs to 486 residues: Alliin lyase 1 (486 aa).

An N-terminal signal peptide occupies residues 1 to 28 (MVESYKKIGSCNKMPCLVILTCIIMSNS). The propeptide occupies 29–38 (LVNNNNMVQA). The EGF-like; atypical domain occupies 51–97 (EAVANINCSEHGRAFLDGIISEGSPKCECNTCYTGPDCSEKIQGCSA). Asn57 carries an N-linked (GlcNAc...) asparagine glycan. Intrachain disulfides connect Cys58-Cys77, Cys79-Cys88, and Cys82-Cys95. 130-138 (YFFNPVSNF) is a chloride binding site. Asn184 and Asn229 each carry an N-linked (GlcNAc...) asparagine glycan. N6-(pyridoxal phosphate)lysine is present on Lys289. A glycan (N-linked (GlcNAc...) asparagine) is linked at Asn366. Cysteines 406 and 414 form a disulfide.

Belongs to the alliinase family. In terms of assembly, homodimer. It depends on pyridoxal 5'-phosphate as a cofactor. In terms of tissue distribution, expressed in bulb (at protein level). Expressed in shoots.

It localises to the vacuole. The catalysed reaction is an S-alkyl-L-cysteine S-oxide = an S-alkyl sulfenate + 2-aminoprop-2-enoate. Functionally, able to cleave the C-S bond of sulfoxide derivatives of Cys to produce allicin, thus giving rise to all sulfur compounds which are responsible for most of the properties of garlic, such as the specific smell and flavor as well as the health benefits like blood lipid or blood pressure lowering. This Allium sativum (Garlic) protein is Alliin lyase 1.